The following is a 366-amino-acid chain: Anhydro-N-acetylmuramic acid kinase (366 aa).

10-17 (GTSLDGVD) is a binding site for ATP.

It belongs to the anhydro-N-acetylmuramic acid kinase family.

It catalyses the reaction 1,6-anhydro-N-acetyl-beta-muramate + ATP + H2O = N-acetyl-D-muramate 6-phosphate + ADP + H(+). It functions in the pathway amino-sugar metabolism; 1,6-anhydro-N-acetylmuramate degradation. The protein operates within cell wall biogenesis; peptidoglycan recycling. Functionally, catalyzes the specific phosphorylation of 1,6-anhydro-N-acetylmuramic acid (anhMurNAc) with the simultaneous cleavage of the 1,6-anhydro ring, generating MurNAc-6-P. Is required for the utilization of anhMurNAc either imported from the medium or derived from its own cell wall murein, and thus plays a role in cell wall recycling. The sequence is that of Anhydro-N-acetylmuramic acid kinase from Nitrobacter winogradskyi (strain ATCC 25391 / DSM 10237 / CIP 104748 / NCIMB 11846 / Nb-255).